We begin with the raw amino-acid sequence, 1583 residues long: Protein mesh (1583 aa).

The first 21 residues, 1–21 (MGVKIKLVLAVVLILSANVLG), serve as a signal peptide directing secretion. Residues 22–1182 (QDEIVNDTES…EFSQRALFLT (1161 aa)) are Extracellular-facing. An NIDO domain is found at 260-415 (GIYFRLDRDL…GRHIFRIDEN (156 aa)). The AMOP domain maps to 647–798 (GQRWSNSMCN…VGCETFRFER (152 aa)). Residues 811–1019 (GVAGIFGDPH…HWQLTDREQR (209 aa)) form the VWFD domain. Residues 1110–1170 (ISCGILETPR…PDYGYTECLR (61 aa)) form the Sushi domain. 2 cysteine pairs are disulfide-bonded: C1112–C1152 and C1138–C1168. The chain crosses the membrane as a helical span at residues 1183–1203 (WGVIVAVILPLGLLICLLWFW). The Cytoplasmic segment spans residues 1204-1472 (CWHKPRSEGK…QEYSSRTLGA (269 aa)). The segment covering 1232-1250 (LRSSSMGNITDTMKSSTIP) has biased composition (polar residues). Residues 1232-1448 (LRSSSMGNIT…IPEAPKSAPV (217 aa)) form a disordered region. The segment covering 1291-1300 (GKSDSGKSDK) has biased composition (basic and acidic residues). The segment covering 1405–1416 (PIPSQYSPTYSE) has biased composition (polar residues). Residues 1473–1493 (TWGIISAVMLPIIIILICVAW) form a helical membrane-spanning segment. Over 1494–1583 (RILQRRKAEE…RQWGGETEIN (90 aa)) the chain is Extracellular. A compositionally biased stretch (basic and acidic residues) spans 1521-1539 (DSVKVTSDDESIPYKKDVT). The segment at 1521 to 1583 (DSVKVTSDDE…RQWGGETEIN (63 aa)) is disordered.

As to expression, in fifth instar larvae, expressed in midgut epithelial cells (at protein level).

It is found in the membrane. The protein localises to the cell junction. Its subcellular location is the septate junction. It localises to the lateral cell membrane. May be required for the proper organization of smooth septate junctions and for the barrier function of the midgut epithelium. The protein is Protein mesh of Bombyx mori (Silk moth).